The primary structure comprises 340 residues: Hydroxyurea phosphotransferase (340 aa).

Asp240 acts as the Proton acceptor in catalysis.

It belongs to the aminoglycoside phosphotransferase family.

Potential phosphotransferase that inactivates hydroxyurea by phosphorylation of the hydroxy group in the hydroxylamine moiety. The polypeptide is Hydroxyurea phosphotransferase (hur) (Kitasatospora aureofaciens (Streptomyces aureofaciens)).